We begin with the raw amino-acid sequence, 56 residues long: Large ribosomal subunit protein bL32 (56 aa).

Residues 1 to 27 (MAVQQNKKSRSRRDMRRSHDALTTAAV) form a disordered region. A compositionally biased stretch (basic residues) spans 7-16 (KKSRSRRDMR).

It belongs to the bacterial ribosomal protein bL32 family.

This chain is Large ribosomal subunit protein bL32, found in Actinobacillus pleuropneumoniae serotype 7 (strain AP76).